The sequence spans 418 residues: Gamma-glutamyl phosphate reductase (418 aa).

This sequence belongs to the gamma-glutamyl phosphate reductase family.

The protein localises to the cytoplasm. It catalyses the reaction L-glutamate 5-semialdehyde + phosphate + NADP(+) = L-glutamyl 5-phosphate + NADPH + H(+). The protein operates within amino-acid biosynthesis; L-proline biosynthesis; L-glutamate 5-semialdehyde from L-glutamate: step 2/2. Functionally, catalyzes the NADPH-dependent reduction of L-glutamate 5-phosphate into L-glutamate 5-semialdehyde and phosphate. The product spontaneously undergoes cyclization to form 1-pyrroline-5-carboxylate. The protein is Gamma-glutamyl phosphate reductase of Geobacter sulfurreducens (strain ATCC 51573 / DSM 12127 / PCA).